A 322-amino-acid polypeptide reads, in one-letter code: Chemokine XC receptor 1 (322 aa).

The Extracellular segment spans residues 1–27 (MESSTAFYDYHDKLSLLCENNVIFFST). A helical membrane pass occupies residues 28–55 (ISTIVLYSLVFLLSLVGNSLVLWVLVKY). At 56–65 (ENLESLTNIF) the chain is on the cytoplasmic side. A helical transmembrane segment spans residues 66–85 (ILNLCLSDLMFSCLLPVLIS). Topologically, residues 86–98 (AQWSWFLGDFFCK) are extracellular. A disulfide bridge links Cys-97 with Cys-170. Residues 99-120 (FFNMIFGISLYSSIFFLTIMTI) traverse the membrane as a helical segment. Residues 121 to 137 (HRYLSVVSPISTLGIHT) lie on the Cytoplasmic side of the membrane. Residues 138 to 162 (LRCRVLVTSCVWAASILFSIPDAVF) form a helical membrane-spanning segment. Topologically, residues 163 to 185 (HKVISLNCKYSEHHGFLASVYQH) are extracellular. The helical transmembrane segment at 186 to 204 (NIFFLLSMGIILFCYVQIL) threads the bilayer. The Cytoplasmic segment spans residues 205–220 (RTLFRTRSRQRHRTVR). The chain crosses the membrane as a helical span at residues 221–243 (LIFTVVVAYFLSWAPYNLTLFLK). The Extracellular segment spans residues 244–259 (TGIIQQSCESLQQLDI). Residues 260–283 (AMIICRHLAFSHCCFNPVLYVFVG) form a helical membrane-spanning segment. Over 284 to 322 (IKFRRHLKHLFQQVWLCRKTSSTVPCSPGTFTYEGPSFY) the chain is Cytoplasmic.

Belongs to the G-protein coupled receptor 1 family. Expressed by dendritic cells from the thymus, slpeen, subcutaneous lymph nodes and mesenteric lymph nodes.

The protein resides in the cell membrane. Receptor for chemokines SCYC1 and SCYC2. Subsequently transduces a signal by increasing the intracellular calcium ions level. Receptor for XCL1/Lymphotactin. In Mus musculus (Mouse), this protein is Chemokine XC receptor 1 (Xcr1).